A 342-amino-acid polypeptide reads, in one-letter code: Galactose mutarotase (342 aa).

Beta-D-galactose-binding positions include 81–82 and His107; that span reads NR. Ser124 carries the phosphoserine modification. Residue His176 is the Proton donor of the active site. Residues 176–178, Asp243, Gln279, and Glu307 each bind beta-D-galactose; that span reads HSY. Residue Glu307 is the Proton acceptor of the active site.

Belongs to the aldose epimerase family. In terms of assembly, monomer.

Its subcellular location is the cytoplasm. It carries out the reaction alpha-D-galactose = beta-D-galactose. The enzyme catalyses alpha-D-glucose = beta-D-glucose. The protein operates within carbohydrate metabolism; hexose metabolism. Its pathway is carbohydrate metabolism; galactose metabolism. Mutarotase that catalyzes the interconversion of beta-D-galactose and alpha-D-galactose during galactose metabolism. Beta-D-galactose is metabolized in the liver into glucose 1-phosphate, the primary metabolic fuel, by the action of four enzymes that constitute the Leloir pathway: GALM, GALK1 (galactokinase), GALT (galactose-1-phosphate uridylyltransferase) and GALE (UDP-galactose-4'-epimerase). Involved in the maintenance of the equilibrium between the beta- and alpha-anomers of galactose, therefore ensuring a sufficient supply of the alpha-anomer for GALK1. Also active on D-glucose although shows a preference for galactose over glucose. This chain is Galactose mutarotase (GALM), found in Bos taurus (Bovine).